A 906-amino-acid chain; its full sequence is Probable dipeptidyl-aminopeptidase B (906 aa).

A compositionally biased stretch (acidic residues) spans 1 to 11 (MRSSEDREDSE). Residues 1-33 (MRSSEDREDSELLPANRPRSPSRSSYDSDDSGL) form a disordered region. Residues 1–85 (MRSSEDREDS…TKASSSRSRR (85 aa)) lie on the Cytoplasmic side of the membrane. The segment covering 21-33 (PSRSSYDSDDSGL) has biased composition (low complexity). A helical; Signal-anchor for type II membrane protein transmembrane segment spans residues 86-106 (LLWLVVLLCCGGWVVAFVLFI). Residues 107–906 (TQGRADYRTA…AKRVWPGFAH (800 aa)) are Vacuolar-facing. N-linked (GlcNAc...) asparagine glycans are attached at residues Asn338 and Asn629. Ser743 functions as the Charge relay system in the catalytic mechanism. A glycan (N-linked (GlcNAc...) asparagine) is linked at Asn797. Residues Asp820 and His853 each act as charge relay system in the active site.

The protein belongs to the peptidase S9B family.

Its subcellular location is the vacuole membrane. It carries out the reaction Release of an N-terminal dipeptide, Xaa-Yaa-|-Zaa-, from a polypeptide, preferentially when Yaa is Pro, provided Zaa is neither Pro nor hydroxyproline.. Functionally, type IV dipeptidyl-peptidase which removes N-terminal dipeptides sequentially from polypeptides having unsubstituted N-termini provided that the penultimate residue is proline. This chain is Probable dipeptidyl-aminopeptidase B (dapB), found in Emericella nidulans (strain FGSC A4 / ATCC 38163 / CBS 112.46 / NRRL 194 / M139) (Aspergillus nidulans).